A 200-amino-acid chain; its full sequence is 3-isopropylmalate dehydratase small subunit (200 aa).

The protein belongs to the LeuD family. LeuD type 1 subfamily. As to quaternary structure, heterodimer of LeuC and LeuD.

It carries out the reaction (2R,3S)-3-isopropylmalate = (2S)-2-isopropylmalate. Its pathway is amino-acid biosynthesis; L-leucine biosynthesis; L-leucine from 3-methyl-2-oxobutanoate: step 2/4. Catalyzes the isomerization between 2-isopropylmalate and 3-isopropylmalate, via the formation of 2-isopropylmaleate. The polypeptide is 3-isopropylmalate dehydratase small subunit (Edwardsiella ictaluri (strain 93-146)).